The sequence spans 347 residues: Zinc-type alcohol dehydrogenase-like protein C16A3.02c (347 aa).

Belongs to the zinc-containing alcohol dehydrogenase family. Quinone oxidoreductase subfamily.

Its subcellular location is the golgi apparatus. It is found in the endoplasmic reticulum. This chain is Zinc-type alcohol dehydrogenase-like protein C16A3.02c, found in Schizosaccharomyces pombe (strain 972 / ATCC 24843) (Fission yeast).